The chain runs to 181 residues: Beta-lactoglobulin-2 (181 aa).

Positions 1–18 (MKCLLLALGLSLMCGNQA) are cleaved as a signal peptide. Cystine bridges form between Cys-84-Cys-179 and Cys-124-Cys-138.

The protein belongs to the calycin superfamily. Lipocalin family. As to quaternary structure, monomer.

It is found in the secreted. In terms of biological role, lactoglobulin is the primary component of whey, it binds retinol and is probably involved in the transport of that molecule. This chain is Beta-lactoglobulin-2 (LGB2), found in Equus caballus (Horse).